A 319-amino-acid chain; its full sequence is Inactive hydroxysteroid dehydrogenase-like protein 1 (319 aa).

A required for mitochondria translocation region spans residues 2–82 (AAVDSFQLLY…CGASEAIAKA (81 aa)). Residues 74–80 (GASEAIA), Lys99, and Asp125 each bind NADP(+).

The protein belongs to the short-chain dehydrogenases/reductases (SDR) family. 17-beta-HSD 3 subfamily.

Its subcellular location is the mitochondrion. The chain is Inactive hydroxysteroid dehydrogenase-like protein 1 (hsdl1) from Danio rerio (Zebrafish).